Here is a 501-residue protein sequence, read N- to C-terminus: Glutamate--tRNA ligase (501 aa).

The 'HIGH' region motif lies at 11 to 21 (PSPTGALHIGG). The 'KMSKS' region motif lies at 260 to 264 (KLSKR). K263 contributes to the ATP binding site.

This sequence belongs to the class-I aminoacyl-tRNA synthetase family. Glutamate--tRNA ligase type 1 subfamily. In terms of assembly, monomer.

It localises to the cytoplasm. It catalyses the reaction tRNA(Glu) + L-glutamate + ATP = L-glutamyl-tRNA(Glu) + AMP + diphosphate. Its function is as follows. Catalyzes the attachment of glutamate to tRNA(Glu) in a two-step reaction: glutamate is first activated by ATP to form Glu-AMP and then transferred to the acceptor end of tRNA(Glu). In Flavobacterium psychrophilum (strain ATCC 49511 / DSM 21280 / CIP 103535 / JIP02/86), this protein is Glutamate--tRNA ligase.